The following is a 442-amino-acid chain: Tol-Pal system protein TolB (442 aa).

The signal sequence occupies residues 1 to 26; the sequence is MRHRSCFSLFAGLALVFCLAVGTAAA.

This sequence belongs to the TolB family. As to quaternary structure, the Tol-Pal system is composed of five core proteins: the inner membrane proteins TolA, TolQ and TolR, the periplasmic protein TolB and the outer membrane protein Pal. They form a network linking the inner and outer membranes and the peptidoglycan layer.

The protein localises to the periplasm. Functionally, part of the Tol-Pal system, which plays a role in outer membrane invagination during cell division and is important for maintaining outer membrane integrity. This is Tol-Pal system protein TolB from Nitratidesulfovibrio vulgaris (strain ATCC 29579 / DSM 644 / CCUG 34227 / NCIMB 8303 / VKM B-1760 / Hildenborough) (Desulfovibrio vulgaris).